The following is a 298-amino-acid chain: tRNA dimethylallyltransferase 2 (298 aa).

G19–T26 is a binding site for ATP. T21–T26 contributes to the substrate binding site. The segment at D44–Q47 is interaction with substrate tRNA.

It belongs to the IPP transferase family. Monomer. The cofactor is Mg(2+).

The catalysed reaction is adenosine(37) in tRNA + dimethylallyl diphosphate = N(6)-dimethylallyladenosine(37) in tRNA + diphosphate. Functionally, catalyzes the transfer of a dimethylallyl group onto the adenine at position 37 in tRNAs that read codons beginning with uridine, leading to the formation of N6-(dimethylallyl)adenosine (i(6)A). The polypeptide is tRNA dimethylallyltransferase 2 (Treponema denticola (strain ATCC 35405 / DSM 14222 / CIP 103919 / JCM 8153 / KCTC 15104)).